We begin with the raw amino-acid sequence, 197 residues long: MSRVGRVERTTKETSVLVEIDLDGTGKTDIATGVGFYDHMLDQLGRHGLFDLTVKTDGDLHIDSHHTIEDTALALGAAFRQALGDKVGIYRFGNCTVPLDESLAQVTVDLSGRPYLVHTEPENMAPMIGEYDVTMTRHILESFVAQAQVALHVHVPYGRNAHHIVECQFKALARALRYASERDPRAAGILPSTKGAL.

This sequence belongs to the imidazoleglycerol-phosphate dehydratase family.

The protein localises to the cytoplasm. The enzyme catalyses D-erythro-1-(imidazol-4-yl)glycerol 3-phosphate = 3-(imidazol-4-yl)-2-oxopropyl phosphate + H2O. It functions in the pathway amino-acid biosynthesis; L-histidine biosynthesis; L-histidine from 5-phospho-alpha-D-ribose 1-diphosphate: step 6/9. The sequence is that of Imidazoleglycerol-phosphate dehydratase (hisB) from Streptomyces coelicolor (strain ATCC BAA-471 / A3(2) / M145).